Consider the following 221-residue polypeptide: Succinate--CoA ligase [ADP-forming] subunit beta, mitochondrial (221 aa).

In terms of domain architecture, ATP-grasp spans 1 to 122; it reads DVVIKAQVLA…DSNSAYRQKI (122 aa). Lysine 5 contacts ATP. 2 positions are modified to N6-acetyllysine: lysine 22 and lysine 26. A Phosphoserine modification is found at serine 114. Threonine 139 is subject to Phosphothreonine. 171–173 provides a ligand contact to substrate; the sequence is GIM. Lysine 196 is subject to N6-acetyllysine.

This sequence belongs to the succinate/malate CoA ligase beta subunit family. ATP-specific subunit beta subfamily. As to quaternary structure, heterodimer of an alpha and a beta subunit. The beta subunit determines specificity for ATP. Interacts with ALAS2.

The protein resides in the mitochondrion. It catalyses the reaction succinate + ATP + CoA = succinyl-CoA + ADP + phosphate. It functions in the pathway carbohydrate metabolism; tricarboxylic acid cycle; succinate from succinyl-CoA (ligase route): step 1/1. In terms of biological role, ATP-specific succinyl-CoA synthetase functions in the citric acid cycle (TCA), coupling the hydrolysis of succinyl-CoA to the synthesis of ATP and thus represents the only step of substrate-level phosphorylation in the TCA. The beta subunit provides nucleotide specificity of the enzyme and binds the substrate succinate, while the binding sites for coenzyme A and phosphate are found in the alpha subunit. The polypeptide is Succinate--CoA ligase [ADP-forming] subunit beta, mitochondrial (Mesocricetus auratus (Golden hamster)).